A 227-amino-acid chain; its full sequence is Triosephosphate isomerase (227 aa).

Asn9–Lys11 provides a ligand contact to substrate. Residue His93 is the Electrophile of the active site. Glu141 acts as the Proton acceptor in catalysis. Substrate is bound by residues Ile146, Gly180, and Ala201–Ser202.

This sequence belongs to the triosephosphate isomerase family. In terms of assembly, homotetramer; dimer of dimers.

The protein localises to the cytoplasm. It catalyses the reaction D-glyceraldehyde 3-phosphate = dihydroxyacetone phosphate. It functions in the pathway carbohydrate biosynthesis; gluconeogenesis. Its pathway is carbohydrate degradation; glycolysis; D-glyceraldehyde 3-phosphate from glycerone phosphate: step 1/1. Involved in the gluconeogenesis. Catalyzes stereospecifically the conversion of dihydroxyacetone phosphate (DHAP) to D-glyceraldehyde-3-phosphate (G3P). This Saccharolobus solfataricus (strain ATCC 35092 / DSM 1617 / JCM 11322 / P2) (Sulfolobus solfataricus) protein is Triosephosphate isomerase.